The sequence spans 362 residues: Dihydroorotate dehydrogenase (quinone) (362 aa).

FMN-binding positions include alanine 62–lysine 66 and threonine 86. Lysine 66 is a binding site for substrate. Asparagine 111–phenylalanine 115 contacts substrate. Asparagine 139 and asparagine 170 together coordinate FMN. A substrate-binding site is contributed by asparagine 170. Residue serine 173 is the Nucleophile of the active site. Substrate is bound at residue asparagine 175. FMN-binding residues include lysine 215 and serine 243. Residue asparagine 244–threonine 245 participates in substrate binding. FMN-binding positions include glycine 266, glycine 295, and tyrosine 316 to serine 317.

It belongs to the dihydroorotate dehydrogenase family. Type 2 subfamily. In terms of assembly, monomer. Requires FMN as cofactor.

Its subcellular location is the cell membrane. The catalysed reaction is (S)-dihydroorotate + a quinone = orotate + a quinol. It participates in pyrimidine metabolism; UMP biosynthesis via de novo pathway; orotate from (S)-dihydroorotate (quinone route): step 1/1. Catalyzes the conversion of dihydroorotate to orotate with quinone as electron acceptor. This is Dihydroorotate dehydrogenase (quinone) from Rhizobium etli (strain ATCC 51251 / DSM 11541 / JCM 21823 / NBRC 15573 / CFN 42).